The chain runs to 103 residues: MQNQKIRIRLKAFDHRLIDQSAQEIVDTAKRTGAQVRGPIPLPTNRERYTVLISPHVNKDARDQYEIRTHKRVLDIVEPTEKTVDALMKLDLAAGVDVQIKLD.

This sequence belongs to the universal ribosomal protein uS10 family. Part of the 30S ribosomal subunit.

Its function is as follows. Involved in the binding of tRNA to the ribosomes. The polypeptide is Small ribosomal subunit protein uS10 (Chromohalobacter salexigens (strain ATCC BAA-138 / DSM 3043 / CIP 106854 / NCIMB 13768 / 1H11)).